The sequence spans 192 residues: E3 ubiquitin-protein ligase RNF185 (192 aa).

Over residues 1–27 (MASKGPSASASPENSSAGGPSGSSNGA) the composition is skewed to low complexity. Positions 1–30 (MASKGPSASASPENSSAGGPSGSSNGAGES) are disordered. Residues 1-130 (MASKGPSASA…GGFQGFGFGD (130 aa)) are Cytoplasmic-facing. The tract at residues 29–80 (ESGGQDSTFECNICLDTAKDAVISLCGHLFCWPCLHQWLETRPNRQVCPVCK) is required for ubiquitin ligase activity and protection against ER stress-induced cell death. The RING-type zinc finger occupies 39 to 80 (CNICLDTAKDAVISLCGHLFCWPCLHQWLETRPNRQVCPVCK). The disordered stretch occupies residues 90 to 123 (PLYGRGSTGQQDPREKTPPRPQGQRPEPENRGGF). Residues 131–151 (GGFQMSFGIGAFPFGIFATAF) traverse the membrane as a helical segment. At 152–171 (NINDGRPPPAVPGTPQYVDE) the chain is on the mitochondrial intermembrane side. The helical transmembrane segment at 172 to 192 (QFLSRLFLFVALVIMFWLLIA) threads the bilayer.

In terms of assembly, interacts with ATG5 and BNIP1. As to expression, ubiquitously expressed.

It localises to the mitochondrion outer membrane. Its subcellular location is the endoplasmic reticulum membrane. The catalysed reaction is S-ubiquitinyl-[E2 ubiquitin-conjugating enzyme]-L-cysteine + [acceptor protein]-L-lysine = [E2 ubiquitin-conjugating enzyme]-L-cysteine + N(6)-ubiquitinyl-[acceptor protein]-L-lysine.. It participates in protein modification; protein ubiquitination. Its function is as follows. E3 ubiquitin-protein ligase that regulates selective mitochondrial autophagy by mediating 'Lys-63'-linked polyubiquitination of BNIP1. Acts in the endoplasmic reticulum (ER)-associated degradation (ERAD) pathway, which targets misfolded proteins that accumulate in the endoplasmic reticulum (ER) for ubiquitination and subsequent proteasome-mediated degradation. Protects cells from ER stress-induced apoptosis. Responsible for the cotranslational ubiquitination and degradation of CFTR in the ERAD pathway. Also acts as a regulator of the innate antiviral response by catalyzing 'Lys-27'-linked polyubiquitination of CGAS at 'Lys-173' and 'Lys-384', thereby promoting CGAS cyclic GMP-AMP synthase activity. Preferentially associates with the E2 enzymes UBE2J1 and UBE2J2. The sequence is that of E3 ubiquitin-protein ligase RNF185 from Homo sapiens (Human).